The following is a 164-amino-acid chain: I-Kappa-B like protein F1 (164 aa).

3 ANK repeats span residues 57-89 (HGRQCIHTVAWHDRANAVMKIEILMQSGVNINA), 94-124 (TGNTLLHIAASTGNYLLADWFCQQLGVDLGA), and 128-157 (QQETAYYIAYKMRDRKMMKLLRAHGVAYNN).

This sequence belongs to the polydnaviridae I-Kappa-B-like protein family.

Its function is as follows. Suppresses the host immune response through NF-kappa-B inactivation. Possesses ankyrin repeat domains required for NF-kappa-B binding but lacks the regulatory regions required for dissociation from NF-kappa-B and degradation. Therefore, prevents host NF-kappa-B release and subsequent activation. In Microplitis demolitor bracovirus (isolate Webb) (MdBV), this protein is I-Kappa-B like protein F1 (F2).